Here is a 130-residue protein sequence, read N- to C-terminus: MQQAGLTLMAVAVCVAFQTSEAILPMASSCCTEVSHHVSGRLLERVSSCSIQRADGDCDLAAVILHVKRRRICISPHNRTLKQWMRASEVKKNGRENVCSGKKQPSRKDRKGHTTRKHRTRGTHRHEASR.

Positions 1 to 16 (MQQAGLTLMAVAVCVA) are cleaved as a signal peptide. Disulfide bonds link Cys30–Cys58 and Cys31–Cys73. An N-linked (GlcNAc...) asparagine glycan is attached at Asn78. Residues 92–130 (KNGRENVCSGKKQPSRKDRKGHTTRKHRTRGTHRHEASR) form a disordered region. Residues 104 to 124 (QPSRKDRKGHTTRKHRTRGTH) are compositionally biased toward basic residues.

The protein belongs to the intercrine beta (chemokine CC) family. Mainly expressed in testis, epithelial cells of normal colon, kidney, Peyer patches, lymph nodes. Also found in lower levels in brain, spleen and lung.

Its subcellular location is the secreted. In terms of biological role, chemotactic for resting CD4, CD8 T-cells and eosinophils. Binds to CCR10 and induces calcium mobilization in a dose-dependent manner. The chain is C-C motif chemokine 28 (Ccl28) from Mus musculus (Mouse).